The following is a 1078-amino-acid chain: Zinc finger protein 827 (1078 aa).

Basic and acidic residues predominate over residues 1–10 (MPRRKQEQPK). A mediates direct interaction with RBBP4 region spans residues 1 to 14 (MPRRKQEQPKRLPS). Positions 1–76 (MPRRKQEQPK…PDTSLGSATP (76 aa)) are disordered. The RRK motif; mediates NuRD recruitment to telomeres signature appears at 3–5 (RRK). Composition is skewed to polar residues over residues 33 to 42 (YGNSSETPSE) and 62 to 76 (EQST…SATP). Glycyl lysine isopeptide (Lys-Gly) (interchain with G-Cter in SUMO2) cross-links involve residues K175, K215, and K225. The tract at residues 307–341 (SLLPDDPLPLPSSEKKPEKVTPPPPPPPPTAQPPQ) is disordered. Positions 326 to 338 (VTPPPPPPPPTAQ) are enriched in pro residues. Residues K357 and K369 each participate in a glycyl lysine isopeptide (Lys-Gly) (interchain with G-Cter in SUMO2) cross-link. 3 C2H2-type zinc fingers span residues 371–393 (FQCP…MVIH), 399–421 (HQCP…MKVH), and 430–452 (FQCQ…MRCH). Residues K463, K472, K520, K546, K577, K584, and K594 each participate in a glycyl lysine isopeptide (Lys-Gly) (interchain with G-Cter in SUMO2) cross-link. The interval 466–490 (IPDPDVKGSPHLSDSGCLGQQREGG) is disordered. Positions 594-640 (KEEPKEEESLSMPLPRSSYVFSPEPEVSTPSVSEDPLTPQEGKGSVL) are disordered. Positions 613–627 (VFSPEPEVSTPSVSE) are enriched in low complexity. Glycyl lysine isopeptide (Lys-Gly) (interchain with G-Cter in SUMO2) cross-links involve residues K636 and K655. K670 participates in a covalent cross-link: Glycyl lysine isopeptide (Lys-Gly) (interchain with G-Cter in SUMO1); alternate. A Glycyl lysine isopeptide (Lys-Gly) (interchain with G-Cter in SUMO2); alternate cross-link involves residue K670. Glycyl lysine isopeptide (Lys-Gly) (interchain with G-Cter in SUMO2) cross-links involve residues K701, K707, K739, K775, and K795. C2H2-type zinc fingers lie at residues 814–836 (FPCD…LSLH) and 842–864 (YKCH…LTVH). Glycyl lysine isopeptide (Lys-Gly) (interchain with G-Cter in SUMO2) cross-links involve residues K867 and K888. C2H2-type zinc fingers lie at residues 894–916 (YSCH…MSLH) and 926–949 (ICCT…GTKH). Basic and acidic residues predominate over residues 945–957 (IGTKHTGDDRKTP). Positions 945-990 (IGTKHTGDDRKTPSESNSPSSSSLSTLSDSANGKDDSDSSQKNKGG) are disordered. Residue K955 forms a Glycyl lysine isopeptide (Lys-Gly) (interchain with G-Cter in SUMO2) linkage. The segment covering 958–974 (SESNSPSSSSLSTLSDS) has biased composition (low complexity). Residues 976–985 (NGKDDSDSSQ) show a composition bias toward basic and acidic residues. Residue K1011 forms a Glycyl lysine isopeptide (Lys-Gly) (interchain with G-Cter in SUMO2) linkage. 2 consecutive C2H2-type zinc fingers follow at residues 1016–1038 (FECV…LQIH) and 1044–1066 (FECD…KKCH).

It belongs to the krueppel C2H2-type zinc-finger protein family. As to quaternary structure, part of a transcription inhibitory ribonucleoprotein complex composed at least of the circular RNA circZNF827, HNRNPK and HNRNPL. Interacts with the nucleosome remodeling and histone deacetylase/NuRD complex. Interacts with RBBP4; the interaction is direct and recruits RBBP4, a component of the NuRD complex, to telomeres.

Its subcellular location is the nucleus. The protein localises to the chromosome. It is found in the telomere. Functionally, as part of a ribonucleoprotein complex composed at least of HNRNPK, HNRNPL and the circular RNA circZNF827 that nucleates the complex on chromatin, may negatively regulate the transcription of genes involved in neuronal differentiation. Could also recruit the nucleosome remodeling and histone deacetylase/NuRD complex to telomeric regions of chromosomes to regulate chromatin remodeling as part of telomere maintenance. This is Zinc finger protein 827 (Znf827) from Mus musculus (Mouse).